Here is a 227-residue protein sequence, read N- to C-terminus: Lipoprotein-releasing system ATP-binding protein LolD (227 aa).

In terms of domain architecture, ABC transporter spans 5 to 227 (LICQNITKHY…QDGILRESNS (223 aa)). 41-48 (GSSGSGKS) is a binding site for ATP.

The protein belongs to the ABC transporter superfamily. Lipoprotein translocase (TC 3.A.1.125) family. The complex is composed of two ATP-binding proteins (LolD) and two transmembrane proteins (LolC and LolE).

It is found in the cell inner membrane. Functionally, part of the ABC transporter complex LolCDE involved in the translocation of mature outer membrane-directed lipoproteins, from the inner membrane to the periplasmic chaperone, LolA. Responsible for the formation of the LolA-lipoprotein complex in an ATP-dependent manner. The chain is Lipoprotein-releasing system ATP-binding protein LolD from Histophilus somni (strain 129Pt) (Haemophilus somnus).